Reading from the N-terminus, the 180-residue chain is Large ribosomal subunit protein uL5 (180 aa).

Belongs to the universal ribosomal protein uL5 family. In terms of assembly, part of the 50S ribosomal subunit; part of the 5S rRNA/L5/L18/L25 subcomplex. Contacts the 5S rRNA and the P site tRNA. Forms a bridge to the 30S subunit in the 70S ribosome.

In terms of biological role, this is one of the proteins that bind and probably mediate the attachment of the 5S RNA into the large ribosomal subunit, where it forms part of the central protuberance. In the 70S ribosome it contacts protein S13 of the 30S subunit (bridge B1b), connecting the 2 subunits; this bridge is implicated in subunit movement. Contacts the P site tRNA; the 5S rRNA and some of its associated proteins might help stabilize positioning of ribosome-bound tRNAs. The sequence is that of Large ribosomal subunit protein uL5 from Roseiflexus castenholzii (strain DSM 13941 / HLO8).